We begin with the raw amino-acid sequence, 547 residues long: Collagen EMF1-alpha (547 aa).

2 disordered regions span residues 1–99 (GVPG…APGV) and 116–311 (GPDG…GGGI). Positions 1-280 (GVPGPNGDVG…QGPRGGQGPK (280 aa)) are triple-helical region. Composition is skewed to low complexity over residues 27 to 69 (QGPD…IRGQ) and 160 to 175 (QGSKGVVGPKGVVGPQ). Lysine 187 carries the allysine modification. A compositionally biased stretch (basic and acidic residues) spans 219 to 228 (VKGEKGEVGD). Low complexity predominate over residues 246-271 (DAGPAGPIGDAGIQGPPGQDGPTGAQ). A compositionally biased stretch (gly residues) spans 272–281 (GPRGGQGPKG). Residues 308 to 336 (GGGIILVPVNDQNPTRSPVSGSVFYRGQA) form a telopeptide region. Residues 337-547 (EETDVNLGSV…GFEMGPACFY (211 aa)) constitute a propeptide, C-terminal propeptide. A Fibrillar collagen NC1 domain is found at 343–547 (LGSVADVIEL…GFEMGPACFY (205 aa)). Residues asparagine 381 and asparagine 406 are each glycosylated (N-linked (GlcNAc...) asparagine).

It belongs to the fibrillar collagen family.

Its subcellular location is the secreted. The protein localises to the extracellular space. The protein resides in the extracellular matrix. This is Collagen EMF1-alpha (COLF1) from Ephydatia muelleri (Mueller's freshwater sponge).